Consider the following 2376-residue polypeptide: Protein Ycf2 (2376 aa).

Disordered stretches follow at residues 173–194 (SSQL…GTED), 226–256 (TEIE…EMNN), and 952–1011 (KRKK…KRKE). The span at 235 to 245 (KGLSGSSSKSR) shows a compositional bias: low complexity. Composition is skewed to basic and acidic residues over residues 246 to 255 (LFTEGEKEMN) and 960 to 1009 (KRKE…PEKR). 1441 to 1448 (GSIGSGRS) provides a ligand contact to ATP. 3 disordered regions span residues 1515 to 1534 (YEDR…DYEP), 1860 to 2046 (LVGS…LRPK), and 2112 to 2230 (PAEE…DGFS). The segment covering 1866 to 2025 (TEEEVEGTEE…GEGTEDEEGE (160 aa)) has biased composition (acidic residues). Positions 2026 to 2038 (GTEKDSSQFDNDR) are enriched in basic and acidic residues. 2 stretches are compositionally biased toward acidic residues: residues 2112–2129 (PAEE…EALE) and 2136–2213 (GEEE…ENDS).

This sequence belongs to the Ycf2 family.

The protein resides in the plastid. It localises to the chloroplast stroma. Functionally, probable ATPase of unknown function. Its presence in a non-photosynthetic plant (Epifagus virginiana) and experiments in tobacco indicate that it has an essential function which is probably not related to photosynthesis. This chain is Protein Ycf2, found in Oenothera glazioviana (Large-flowered evening primrose).